A 908-amino-acid polypeptide reads, in one-letter code: Translation initiation factor IF-2 (908 aa).

The interval 52–318 (QSHGQEEKRR…RSSQSSQHKF (267 aa)) is disordered. Residues 65 to 84 (KSKTTSTARVTGSSGKSKSV) are compositionally biased toward polar residues. 6 stretches are compositionally biased toward basic and acidic residues: residues 94–108 (FEKP…ELAA), 120–138 (AAKD…EERQ), 176–185 (IEVKPKDQPK), 193–238 (PKVE…EQMR), 270–280 (SFEKERREIKR), and 294–303 (KNQDEREIKN). The 170-residue stretch at 409–578 (TRPPVVTIMG…SLQAELMELE (170 aa)) folds into the tr-type G domain. The tract at residues 418 to 425 (GHVDHGKT) is G1. Residue 418 to 425 (GHVDHGKT) coordinates GTP. The tract at residues 443-447 (GITQH) is G2. The interval 464–467 (DTPG) is G3. Residues 464-468 (DTPGH) and 518-521 (NKMD) each bind GTP. The G4 stretch occupies residues 518 to 521 (NKMD). Residues 554 to 556 (SAK) are G5.

Belongs to the TRAFAC class translation factor GTPase superfamily. Classic translation factor GTPase family. IF-2 subfamily.

It localises to the cytoplasm. One of the essential components for the initiation of protein synthesis. Protects formylmethionyl-tRNA from spontaneous hydrolysis and promotes its binding to the 30S ribosomal subunits. Also involved in the hydrolysis of GTP during the formation of the 70S ribosomal complex. The sequence is that of Translation initiation factor IF-2 from Psychrobacter cryohalolentis (strain ATCC BAA-1226 / DSM 17306 / VKM B-2378 / K5).